Consider the following 380-residue polypeptide: MTAEVQQPSVQTPAHSSPMTEKPVQTPVMETSSSSSSTKAKKTNAGIRRPEKPPYSYIALIVMAIQSSPTKRLTLSEIYQFLQSRFPFFRGSYQGWKNSVRHNLSLNECFIKLPKGLGRPGKGHYWTIDPASEFMFEEGSFRRRPRGFRRKCQALKPSMYSMMNGLGFNHIPESYNFQGGGGGLSCPPNSLSLESGIGMMNGHLASNMEGMGLAGHSMPHLSTNSGHSYMGSCTGSSGTEYPHHDSSASPLLTSGGVMDPHAVYSSTASAWPSAPPTSLNNGTSYIKQQPLSPCNPGASSLQPSLPTHSLEQSYLHQNGHGTTDLQGIPRYHTQSPSMCDRKEFVFSFNAMTSSSMHSPGSSSYYHHQQVSYQDIKPCVM.

Polar residues predominate over residues 1–19 (MTAEVQQPSVQTPAHSSPM). Residues 1–49 (MTAEVQQPSVQTPAHSSPMTEKPVQTPVMETSSSSSSTKAKKTNAGIRR) are disordered. The segment at residues 52–146 (KPPYSYIALI…EEGSFRRRPR (95 aa)) is a DNA-binding region (fork-head).

The protein localises to the nucleus. This is Forkhead box protein F1 (foxf1) from Danio rerio (Zebrafish).